The chain runs to 315 residues: MEVTNQSNGCSNNEKESPYISSVLPGWFSEISPLWPGEAHSLKVEKILFQGKSDYQNVMVFQSSTYGKVLVLDGVIQLTERDECAYQEMITHLPLCSIPNPKKVLVIGGGDGGVLREVSRHSSVEQIDICEIDKMVVEVAKEFFPDVAVGYEDPRVNLHIGDGVAFLKNVPAGTYDAVIVDSSDPIGPAQELFEKPFFESIARALRPGGVVSTQAESIWLHMHIIEEIVANCRQIFKGSVNYAWTTVPTYPSGMIGFMLCSTEGPAVDFKNPINPIDDESGPKTIAPLKFYNSEIHQASFCLPSFAKRVIESKGK.

In terms of domain architecture, PABS spans 25 to 262; it reads PGWFSEISPL…GMIGFMLCST (238 aa). Gln56 contacts S-adenosyl 3-(methylsulfanyl)propylamine. Tyr86 is a binding site for putrescine. Residues Gln87, Asp111, Glu131, 162-163, and Asp181 each bind S-adenosyl 3-(methylsulfanyl)propylamine; that span reads DG. Asp181 serves as the catalytic Proton acceptor. Residues 181–184 and Tyr250 each bind putrescine; that span reads DSSD.

Belongs to the spermidine/spermine synthase family.

It carries out the reaction S-adenosyl 3-(methylsulfanyl)propylamine + putrescine = S-methyl-5'-thioadenosine + spermidine + H(+). Its pathway is amine and polyamine biosynthesis; spermidine biosynthesis; spermidine from putrescine: step 1/1. This chain is Spermidine synthase 1, found in Hyoscyamus niger (Black henbane).